The following is a 295-amino-acid chain: Protoheme IX farnesyltransferase (295 aa).

At 1 to 9 the chain is on the cytoplasmic side; the sequence is MSVKHFIQI. Residues 10–28 traverse the membrane as a helical segment; sequence TKPGIIFGNVLSVAGGFFL. The Periplasmic segment spans residues 29–37; it reads ASKGHVDFA. Residues 38–56 traverse the membrane as a helical segment; it reads LFLAVVIGTSLVVASGCVF. The Cytoplasmic portion of the chain corresponds to 57–78; it reads NNCIDRDIDHKMERTKNRVMVQ. A helical membrane pass occupies residues 79-97; the sequence is GGMSLPLALIYATLLGVAG. Residues 98 to 107 lie on the Periplasmic side of the membrane; that stretch reads FSLLYVQANP. The chain crosses the membrane as a helical span at residues 108-126; that stretch reads LSAFCALIGFIVYVGFYSL. The Cytoplasmic segment spans residues 127-197; the sequence is WLKRKSVHGT…YSAANIPVLP (71 aa). The chain crosses the membrane as a helical span at residues 198 to 216; the sequence is VARGILAAKKQIVLYVLAF. Over 217–228 the chain is Periplasmic; the sequence is VLATLMLTLGGY. Residues 229 to 247 form a helical membrane-spanning segment; it reads AGLGYLAVAAAMGLYWLYM. Over 248 to 268 the chain is Cytoplasmic; it reads AWGGYKAEDDSKWARKVFGFS. Residues 269–287 form a helical membrane-spanning segment; that stretch reads ILTVTALSVMMGVDSQTAA. Over 288-295 the chain is Periplasmic; that stretch reads DVLMTYAR.

Belongs to the UbiA prenyltransferase family. Mg(2+) serves as cofactor. Requires Ca(2+) as cofactor.

It is found in the cell inner membrane. It catalyses the reaction heme b + (2E,6E)-farnesyl diphosphate + H2O = Fe(II)-heme o + diphosphate. Converts protoheme IX and farnesyl diphosphate to heme O. The chain is Protoheme IX farnesyltransferase (cyoE) from Pseudomonas putida (Arthrobacter siderocapsulatus).